A 266-amino-acid chain; its full sequence is Bax inhibitor 1 (266 aa).

The tract at residues 1-22 (MPANYQSVPQDDPSVPNLAQAP) is disordered. 7 consecutive transmembrane segments (helical) span residues 70–90 (LFVT…SFWV), 92–112 (MHPW…FGLI), 123–143 (IFLF…ITFF), 147–167 (IILE…AFTF), 177–197 (GGFL…FFFV), 201–221 (PFID…YILF), and 240–260 (LMLY…LGML).

The protein belongs to the BI1 family. LFG subfamily.

It localises to the endoplasmic reticulum membrane. Its subcellular location is the mitochondrion membrane. The protein resides in the golgi apparatus membrane. It is found in the vacuole membrane. Functionally, links the unfolded protein response and programmed cell death and mediates mitochondrial-dependent apoptosis. Induces cell death and disruption of the mitochondrial transmembrane potential. The chain is Bax inhibitor 1 (bxi1) from Schizosaccharomyces pombe (strain 972 / ATCC 24843) (Fission yeast).